We begin with the raw amino-acid sequence, 202 residues long: Glycerol-3-phosphate acyltransferase (202 aa).

6 consecutive transmembrane segments (helical) span residues 2-22 (MIIVMLLLSYLIGAFPSGFVI), 54-74 (FLVTFLDIFKGFITVFFPLWL), 85-105 (FFTNGLIVGLFAILGHVYPVY), 120-140 (VVLGVNPILLLILAIIFFIVL), 141-161 (KIFKYVSLASIVAAICCVIGS), and 162-182 (LIIQDYILLVVSFLVSIILII).

Belongs to the PlsY family. As to quaternary structure, probably interacts with PlsX.

It localises to the cell membrane. The catalysed reaction is an acyl phosphate + sn-glycerol 3-phosphate = a 1-acyl-sn-glycero-3-phosphate + phosphate. The protein operates within lipid metabolism; phospholipid metabolism. Functionally, catalyzes the transfer of an acyl group from acyl-phosphate (acyl-PO(4)) to glycerol-3-phosphate (G3P) to form lysophosphatidic acid (LPA). This enzyme utilizes acyl-phosphate as fatty acyl donor, but not acyl-CoA or acyl-ACP. The chain is Glycerol-3-phosphate acyltransferase from Staphylococcus aureus (strain USA300).